The sequence spans 75 residues: Conotoxin Vn5.5 (75 aa).

The signal sequence occupies residues 1-19; sequence MLCLPVFIILLLLASPAAP. The propeptide occupies 20-59; that stretch reads NPLEKRIQSDLIRAALEDADMKTDEREIVNIIDSISDVAK. Gln-60 is subject to Pyrrolidone carboxylic acid.

The protein belongs to the conotoxin T superfamily. Post-translationally, contains 2 disulfide bonds that can be either 'C1-C3, C2-C4' or 'C1-C4, C2-C3', since these disulfide connectivities have been observed for conotoxins with cysteine framework V (for examples, see AC P0DQQ7 and AC P81755). Expressed by the venom duct.

The protein localises to the secreted. In Conus ventricosus (Mediterranean cone), this protein is Conotoxin Vn5.5.